Reading from the N-terminus, the 542-residue chain is MTRYVFITGGVVSSLGKGLASAALAALLQARGYRVRLRKLDPYLNVDPGTMSPTQHGEVFVTDDGAETDLDLGHYERFTGLPASRADNVTTGRIYLDIITKERRGDYLGATIQVIPHVTNAIKAFVLDGNDDYDFVLVEIGGTVGDIEGLPFFEAIRQIGQERPRGSVCYLHLTLLPYIPSAGELKTKPTQHSVKELRSIGIQPDILLCRCDRPIPQDERRKLGLFCNVRESAVIEARDVDTIYAVPLSYREAGLDREILAHFQMEPETEPKLDRWQNILERVRNPEGEVTIAIVGKYTGLKDAYKSLTEALTHGGIANNVRVNLEWIEAEVFEREDPAPFLEGLHGILVPGGFGQRGAEGKIRAARYARERNIPYFGICFGMQMAVIEAARSLAGIEGANSTEFGATAEPVVGLLTEWMRGNELERRAAESDLGGTMRLGAYKATLGADTKIAQMYGGTEISERHRHRYEVNMAYRACLEAKGLRFSGTSPDGLLPETVEHEGHPWFIGVQFHPELKSRPFEPHPLFKGFIAAAIDQSRLV.

Residues 1-265 (MTRYVFITGG…DREILAHFQM (265 aa)) are amidoligase domain. Residue serine 13 coordinates CTP. Residue serine 13 participates in UTP binding. Residues 14-19 (SLGKGL) and aspartate 71 each bind ATP. Mg(2+) is bound by residues aspartate 71 and glutamate 139. CTP is bound by residues 146 to 148 (DIE), 186 to 191 (KTKPTQ), and lysine 222. Residues 186-191 (KTKPTQ) and lysine 222 each bind UTP. 238–240 (RDV) contributes to the ATP binding site. The Glutamine amidotransferase type-1 domain maps to 291–541 (TIAIVGKYTG…IAAAIDQSRL (251 aa)). Glycine 353 contributes to the L-glutamine binding site. Cysteine 380 acts as the Nucleophile; for glutamine hydrolysis in catalysis. L-glutamine contacts are provided by residues 381-384 (FGMQ), glutamate 404, and arginine 469. Active-site residues include histidine 514 and glutamate 516.

This sequence belongs to the CTP synthase family. As to quaternary structure, homotetramer.

It carries out the reaction UTP + L-glutamine + ATP + H2O = CTP + L-glutamate + ADP + phosphate + 2 H(+). It catalyses the reaction L-glutamine + H2O = L-glutamate + NH4(+). The enzyme catalyses UTP + NH4(+) + ATP = CTP + ADP + phosphate + 2 H(+). It participates in pyrimidine metabolism; CTP biosynthesis via de novo pathway; CTP from UDP: step 2/2. Its activity is regulated as follows. Allosterically activated by GTP, when glutamine is the substrate; GTP has no effect on the reaction when ammonia is the substrate. The allosteric effector GTP functions by stabilizing the protein conformation that binds the tetrahedral intermediate(s) formed during glutamine hydrolysis. Inhibited by the product CTP, via allosteric rather than competitive inhibition. Functionally, catalyzes the ATP-dependent amination of UTP to CTP with either L-glutamine or ammonia as the source of nitrogen. Regulates intracellular CTP levels through interactions with the four ribonucleotide triphosphates. The chain is CTP synthase from Methylorubrum extorquens (strain CM4 / NCIMB 13688) (Methylobacterium extorquens).